The sequence spans 163 residues: uncharacterized protein (163 aa).

This is an uncharacterized protein from Dictyostelium discoideum (Social amoeba).